The primary structure comprises 188 residues: CMT1A duplicated region transcript 15 protein (188 aa).

Expressed in fetal heart, kidney, liver, lung and spleen.

In Homo sapiens (Human), this protein is CMT1A duplicated region transcript 15 protein (CDRT15).